We begin with the raw amino-acid sequence, 432 residues long: MSAYSPLSAQLDADTDVDVESTRTEGRRKMEWTLQHMPILQELRARFAETKPLAGETIGMAMHVEAKTANLVELLALGGAEVAITGCNPLSTHDDVSAALDSNENVTSYAKRGVDEEAYYDAIEAVVAHEPTITIDDGMDMVYAIHEDHPDLLDTIIGGAEETTTGVHRLRAMDEDDELQYPVFAVNDTPMKRLFDNVHGTGESALATIAMTTNLSYAGKNVVVAGYGYCGKGVAQKAAGQNANVIVTEVEPRRALEAHMEGYEVMPMNEAATRGDVFVTTTGNRDVITQEDFEVMSDGAILANAGHFDVEINLEELSELAIDTYEARDGVQAYELGDGRRLNVLAEGRLVNLAAPIALGHPAEVMDQSFGIQAVCVRELIENKSSYDAGVHNVPDELDREVAEIKLKAEGVDIDSLTQTQSEYLDSWSHGT.

The segment at 1–24 is disordered; sequence MSAYSPLSAQLDADTDVDVESTRT. Substrate-binding residues include D137 and E162. An NAD(+)-binding site is contributed by 163-165; that stretch reads TTT. The substrate site is built by K192 and D196. NAD(+) contacts are provided by residues N197, 226–231, E249, N284, 305–307, and N352; these read GYGYCG and AGH.

It belongs to the adenosylhomocysteinase family. NAD(+) serves as cofactor.

Its subcellular location is the cytoplasm. It carries out the reaction S-adenosyl-L-homocysteine + H2O = L-homocysteine + adenosine. It participates in amino-acid biosynthesis; L-homocysteine biosynthesis; L-homocysteine from S-adenosyl-L-homocysteine: step 1/1. May play a key role in the regulation of the intracellular concentration of adenosylhomocysteine. The polypeptide is Adenosylhomocysteinase (Haloquadratum walsbyi (strain DSM 16790 / HBSQ001)).